The following is a 145-amino-acid chain: Ubiquitin-conjugating enzyme E2 variant 1C (145 aa).

In terms of domain architecture, UBC core spans 12-145; that stretch reads PRNFRLLEEL…LVQPPEGTFF (134 aa).

This sequence belongs to the ubiquitin-conjugating enzyme family. As to quaternary structure, heterodimer with UBC35 or UBC36. Expressed in roots, shoots, leaves, stems and flowers, but not in pollen.

In terms of biological role, has no ubiquitin ligase activity on its own. The heterodimer with UBC catalyzes the synthesis of non-canonical poly-ubiquitin chains that are linked through 'Lys-63'. This type of poly-ubiquitination does not lead to protein degradation by the proteasome. Mediates transcriptional activation of target genes. May play a role in the control of progress through the cell cycle and differentiation. May play a role in the error-free DNA repair pathway and contributes to the survival of cells after DNA damage. The protein is Ubiquitin-conjugating enzyme E2 variant 1C (UEV1C) of Arabidopsis thaliana (Mouse-ear cress).